A 943-amino-acid polypeptide reads, in one-letter code: Protein translocase subunit SecA (943 aa).

ATP contacts are provided by residues Gln-77, 95–99 (GEGKT), and Asp-484.

It belongs to the SecA family. Monomer and homodimer. Part of the essential Sec protein translocation apparatus which comprises SecA, SecYEG and auxiliary proteins SecDF. Other proteins may also be involved.

It localises to the cell membrane. It is found in the cytoplasm. The catalysed reaction is ATP + H2O + cellular proteinSide 1 = ADP + phosphate + cellular proteinSide 2.. Functionally, part of the Sec protein translocase complex. Interacts with the SecYEG preprotein conducting channel. Has a central role in coupling the hydrolysis of ATP to the transfer of proteins into and across the cell membrane, serving as an ATP-driven molecular motor driving the stepwise translocation of polypeptide chains across the membrane. In Mesoplasma florum (strain ATCC 33453 / NBRC 100688 / NCTC 11704 / L1) (Acholeplasma florum), this protein is Protein translocase subunit SecA.